The following is a 281-amino-acid chain: Inositol diphosphatase SIW14 (281 aa).

Residues Met-1–Ile-20 form a disordered region. Residues Lys-7–Ile-20 show a composition bias toward basic and acidic residues. Residue Ser-94 is modified to Phosphoserine. One can recognise a Tyrosine-protein phosphatase domain in the interval Asn-121–Ala-271. Asn-189, Ile-190, and His-193 together coordinate 1D-myo-inositol hexakisphosphate. The active-site Phosphocysteine intermediate is the Cys-214.

It belongs to the protein-tyrosine phosphatase family. Atypical dual-specificity phosphatase Siw14-like subfamily. Monomer.

The protein localises to the cytoplasm. The enzyme catalyses 5-diphospho-1D-myo-inositol 1,2,3,4,6-pentakisphosphate + H2O = 1D-myo-inositol hexakisphosphate + phosphate + H(+). It carries out the reaction 5-diphospho-1D-myo-inositol 1,3,4,6-tetrakisphosphate + H2O = 1D-myo-inositol 1,3,4,5,6-pentakisphosphate + phosphate + H(+). It catalyses the reaction 3,5-bis(diphospho)-1D-myo-inositol 1,2,4,6-tetrakisphosphate + H2O = 3-diphospho-1D-myo-inositol 1,2,4,5,6-pentakisphosphate + phosphate + 2 H(+). The catalysed reaction is 1,5-bis(diphospho)-1D-myo-inositol 2,3,4,6-tetrakisphosphate + H2O = 1-diphospho-1D-myo-inositol 2,3,4,5,6-pentakisphosphate + phosphate + 2 H(+). The enzyme catalyses 6-diphospho-1D-myo-inositol pentakisphosphate + H2O = 1D-myo-inositol hexakisphosphate + phosphate + H(+). Selectively cleaves the beta-phosphate at the 5-position of soluble inositol pyrophosphates. Converts 5-diphosphoinositol tetrakisphosphate (5-PP-InsP(4)) into inositol pentakisphosphate (InsP(5)), 5-diphosphoinositol pentakisphosphate (5-PP-IP(5) or 5-InsP(7)) into inositol hexakisphosphate (IP(6) or InsP(6)), and 1,5-bisdiphosphoinositol tetrakisphosphate (1,5-PP-IP(5) or InsP(8)) into 1-diphosphoinositol pentakisphosphate (1-PP-IP(5) or 1-InsP(7)). Also has activity on 1,5-bis-diphosphoinositol 2,3,4,6-tetrakisphosphate (1,5-InsP(8)) and 3,5-InsP(8). Modulates inositol pyrophosphate metabolism that may have an influence in stress response. Plays a role in actin filament organization and endocytosis. Functions as a prion suppressing factor possibly due to its phosphatase activity against inositol pyrophosphates, which are signal transduction molecules involved in prion propagation. This chain is Inositol diphosphatase SIW14 (SIW14), found in Saccharomyces cerevisiae (strain ATCC 204508 / S288c) (Baker's yeast).